Reading from the N-terminus, the 351-residue chain is Probable aldo-keto reductase 2 (351 aa).

The Proton donor role is filled by tyrosine 67. Position 134 (histidine 134) interacts with substrate. An NADP(+)-binding site is contributed by 213 to 223 (SPLGRGFFSAG). A disordered region spans residues 317 to 351 (YASTDDVRGDRYPQAMANTTWQNSETPPLSSWKAQ). The segment covering 332 to 351 (MANTTWQNSETPPLSSWKAQ) has biased composition (polar residues).

This sequence belongs to the aldo/keto reductase family.

The chain is Probable aldo-keto reductase 2 from Oryza sativa subsp. indica (Rice).